The following is a 2275-amino-acid chain: MPETVGHEEPALPSSPQAGGAVAYNAISKELQPLPPTETANGGIIPPASSRIEGSTGRLCALELEDGTVYQGYNFGAEKSVAGELVFQTGMVGYPESITDPSYRGQILVITFPLVGNYGVPSRETMDELLKTLPKHFESTEIHIAALVVATYAGENYSHFLAESSLGQWLKEQGVPAIHGVDTRALTKRIRQKGSMLGRLLLHKADVAETDAALAQDTWKSSFEQIDWVDPNTKNLVSEVSIREPKLFSPPENVALKHPSSRPIRVLCLDVGLKFNQLRCLVARGVEVLVVPWDYDFPTLAGKDYDGLFVSNGPGDPATMTTTVNNLAKTMQEARTPIFGICLGHQLIARSVGAQTLKMKFGNRGHNIPCTSLVTGKCHITSQNHGYAVDSSTLPSDWQELFVNANDGSNEGIRHVSRPYFSVQFHPESTPGPRDTEYLFDVFINAIKDTIASPEALQKPVNFPGGAVAENIKASPRVSVKKVLILGSGGLSIGQAGEFDYSGSQAIKALKEEGIYTILINPNIATIQTSKGLADKVYFLPVNADFVRKVIKHERPDAIYVTFGGQTALQVGIQLKDEFESLGVKVLGTPIDTIITTEDRELFARSMDSIGEKCAKSASASSLEEALQVVESIGFPVIVRAAYALGGLGSGFADNLDELKDLCAKAFAASPQVLIERSMKGWKEIEYEVVRDARDNCITVCNMENFDPLGIHTGDSIVVAPSQTLSDEDYNMLRTTAVNVIRHLGVVGECNIQYALNPYSKEYCIIEVNARLSRSSALASKATGYPLAFIAAKLGLNIPLNEIKNSVTKVTCACFEPSLDYCVVKIPRWDLKKFTRVSTQLGSSMKSVGEVMAIGRTFEEAIQKAIRSVDFHNLGFNETNALMSIKTELQTPSDQRLFAIANAMAAGYSVDDIWKLTNIDKWFLTRLKGLSDFGKLMTNYNASTVTAPLLRQAKQLGFSDRQLAKFLSSNELAIRRLRVEAGIIPIVKQIDTVAAEFPSVTNYLYLTYNASEHDVRFDDNGIMVLGSGVYRIGSSVEFDWCSVRTIRTLREQGHKTVMVNYNPETVSTDYDEADRLYFENINLETVLDIYQLESSSGVIMSMGGQTPNNIALPLHRLNVRILGTSPEMIDGAENRYKFSRMLDRIGVDQPAWKELTSIEEAREFCDKVGYPVLVRPSYVLSGAAMNTVYSEHDLASYLNQAADVSREHPVVITKYIENAKEIEMDAVARNGVMVGHFISEHVENAGVHSGDATLILPPQDLDPETVRRIEEATRKIGNALNVTGPFNIQFIAKDNDIKVIECNVRASRSFPFVSKVMGVDLIEMATKAMIGAPFAEYPPVTIPKDYVGVKVPQFSFSRLAGADPVLGVEMASTGEVASFGRDKYEAYLKALLSTGFKLPKRNILLSIGSYKEKMEMLPSIIKLRDVGFELFATSGTADFLKENGVPVKYLEILPGEDEDIKSEYSLTQHLANNLIDLYINLPSSNRFRRPANYMSKGYRTRRMAVDYQTPLVTNVKNAKILIEAIARHYALNVQTIDYQTSHRSIILPGLINVGAFVPGLGSADSKDFEAVTKASIAAGFSMIRVMPVGVDSSITDARTLKLVQQNAGKASFCDYNFSVVATSSNSAEVGQLTGEVGSLFIPFNHLSGNISKVAAVTSHFGAWPSSKPIITDAKSTDLASVLLLASLHSRNIHVMSVTSKEDIGLIALSKEKGLKVTCDVSIYCLFLSRDDYPEAAFLPTAEDQKALWEHLSTIDIFSIGSIPYQLAGEKGSPAAGIAEALPLLFTAVSEGRLTVEDIIARLYENPKKIFELHDQSDSSVEVEIDRPYLFQSAQAWSPFSGKSVKGLVQRVIFQGKTSCLDSEITPDAPKGSDMSGHRIVPASPSLKAMSPRVDGALDRRQSISIAGTPARLGRKPVDHFPAATGAELGPPLYTPVPRASSPLLQMLSRSPFKQKHVLSVNQFNRADLHLLFTVAQEMRLGVQREGVLDILKGRLLCTLFYEPSTRTSASFDAAMQRLGGRTIAISTEHSSTKKGETLQDTLRTLGCYGDAVVLRHPEPSSTEVAAKFSPVPVINGGNGSVEHPTQAFLDLFTIREELGTVGGLTITFTGDLKYGRPVHSLIKLLQFYDVRVQLVAPKDLSLPADIRQQLLATGQLLTESEELTPEIVARSDVLYSTRVQKERFADLEQYERLKNSFIIDNALLKHAKSHMVVMHPLPRNAEVSEEVDFDQRAAYFRQVSLQSRGPSSEFDMLMWMQMRYGLYCRMALLALIMAP.

Residues 1–440 (MPETVGHEEP…PGPRDTEYLF (440 aa)) form a GATase (Glutamine amidotransferase) region. L-glutamine-binding residues include Ser102, Gly313, and Gly315. In terms of domain architecture, Glutamine amidotransferase type-1 spans 265–453 (RVLCLDVGLK…INAIKDTIAS (189 aa)). The Nucleophile; for GATase activity role is filled by Cys342. L-glutamine is bound by residues Leu343, Gln346, Asn384, Gly386, and Tyr387. Residues His426 and Glu428 each act as for GATase activity in the active site. The segment at 441–482 (DVFINAIKDTIASPEALQKPVNFPGGAVAENIKASPRVSVKK) is linker. The interval 483–1522 (VLILGSGGLS…TNVKNAKILI (1040 aa)) is CPSase (Carbamoyl-phosphate synthase). ATP is bound by residues Arg600, Arg640, Gly646, Gly647, Arg677, Met679, Glu684, Gly710, Ile711, His712, Gln753, and Glu767. ATP-grasp domains follow at residues 604-796 (ARSM…KLGL) and 1139-1330 (SRML…KAMI). Residues Gln753, Glu767, and Asn769 each coordinate Mg(2+). The Mn(2+) site is built by Gln753, Glu767, and Asn769. ATP contacts are provided by Arg1175, Lys1214, Ile1216, Glu1221, Gly1246, Val1247, His1248, Ser1249, Gln1289, and Glu1301. Mg(2+) is bound by residues Gln1289, Glu1301, and Asn1303. Mn(2+)-binding residues include Gln1289, Glu1301, and Asn1303. An MGS-like domain is found at 1396-1575 (FKLPKRNILL…KDFEAVTKAS (180 aa)). The tract at residues 1523-1532 (EAIARHYALN) is linker. Positions 1533–1862 (VQTIDYQTSH…FQGKTSCLDS (330 aa)) are defective DHOase domain. Positions 1863-1882 (EITPDAPKGSDMSGHRIVPA) are disordered. A linker region spans residues 1863–1953 (EITPDAPKGS…LQMLSRSPFK (91 aa)). Residues 1954–2258 (QKHVLSVNQF…EFDMLMWMQM (305 aa)) form an ATCase (Aspartate transcarbamylase) region. Carbamoyl phosphate is bound by residues Arg2006 and Thr2007. Residue Lys2034 participates in L-aspartate binding. Residues Arg2055, His2083, and Gln2086 each coordinate carbamoyl phosphate. L-aspartate is bound by residues Arg2116 and Arg2178. The carbamoyl phosphate site is built by Leu2217 and Pro2218.

In the central section; belongs to the metallo-dependent hydrolases superfamily. DHOase family. CAD subfamily. The protein in the N-terminal section; belongs to the CarA family. This sequence in the 2nd section; belongs to the CarB family. It in the 3rd section; belongs to the metallo-dependent hydrolases superfamily. DHOase family. CAD subfamily. In the C-terminal section; belongs to the aspartate/ornithine carbamoyltransferase superfamily. ATCase family. Requires Mg(2+) as cofactor. The cofactor is Mn(2+).

The catalysed reaction is hydrogencarbonate + L-glutamine + 2 ATP + H2O = carbamoyl phosphate + L-glutamate + 2 ADP + phosphate + 2 H(+). It catalyses the reaction L-glutamine + H2O = L-glutamate + NH4(+). The enzyme catalyses hydrogencarbonate + NH4(+) + 2 ATP = carbamoyl phosphate + 2 ADP + phosphate + 2 H(+). It carries out the reaction carbamoyl phosphate + L-aspartate = N-carbamoyl-L-aspartate + phosphate + H(+). The protein operates within pyrimidine metabolism; UMP biosynthesis via de novo pathway; (S)-dihydroorotate from bicarbonate: step 1/3. It participates in pyrimidine metabolism; UMP biosynthesis via de novo pathway; (S)-dihydroorotate from bicarbonate: step 2/3. In terms of biological role, multifunctional protein that encodes the first 2 enzymatic activities of the de novo pyrimidine pathway: carbamoylphosphate synthetase (CPSase; EC 6.3.5.5) and aspartate transcarbamylase (ATCase; EC 2.1.3.2). The CPSase-function is accomplished in 2 steps, by a glutamine-dependent amidotransferase activity (GATase) that binds and cleaves glutamine to produce ammonia, followed by an ammonium-dependent carbamoyl phosphate synthetase, which reacts with the ammonia, hydrogencarbonate and ATP to form carbamoyl phosphate. The endogenously produced carbamoyl phosphate is sequestered and channeled to the ATCase active site. ATCase then catalyzes the formation of carbamoyl-L-aspartate from L-aspartate and carbamoyl phosphate. The chain is Multifunctional protein pyrABCN from Emericella nidulans (strain FGSC A4 / ATCC 38163 / CBS 112.46 / NRRL 194 / M139) (Aspergillus nidulans).